The primary structure comprises 478 residues: Septin-4 (478 aa).

The interval 1–115 (MDHSLGWQGN…RSPWGKLDPY (115 aa)) is disordered. Residues Ser-28, Ser-29, and Ser-68 each carry the phosphoserine modification. Residues 84–93 (PQPSDSQQYF) show a composition bias toward polar residues. Residues 94–108 (SAPAPLSPSSRPRSP) show a composition bias toward low complexity. Ser-117 and Ser-118 each carry phosphoserine. Residues 141 to 414 (KGFDFTLMVA…ENYRAQCIQS (274 aa)) form the Septin-type G domain. Positions 151–158 (GESGLGKS) are G1 motif. GTP is bound by residues 151 to 158 (GESGLGKS) and Thr-185. The tract at residues 208–211 (DTPG) is G3 motif. A G4 motif region spans residues 289-292 (AKAD). 290-298 (KADTLTPPE) provides a ligand contact to GTP. Residue Ser-325 is modified to Phosphoserine. Positions 348 and 363 each coordinate GTP. Positions 428-449 (LTRESGTDFPIPAVPPGTDPET) are disordered. At Ser-432 the chain carries Phosphoserine. Thr-434 is modified (phosphothreonine). Residues 447 to 478 (PETEKLIREKDEELRRMQEMLHKIQRQMKETH) adopt a coiled-coil conformation.

This sequence belongs to the TRAFAC class TrmE-Era-EngA-EngB-Septin-like GTPase superfamily. Septin GTPase family. In terms of assembly, septins polymerize into heterooligomeric protein complexes that form filaments, and can associate with cellular membranes, actin filaments and microtubules. GTPase activity is required for filament formation. Interacts with SEPTIN8. Component of a septin core octameric complex consisting of SEPTIN12, SEPTIN7, SEPTIN6 and SEPTIN2 or SEPTIN4 in the order 12-7-6-2-2-6-7-12 or 12-7-6-4-4-6-7-12. Interacts with SEPTIN14 (via C-terminus). Interacts with DYRK1A. Interacts with SLC6A3/DAT and SNCA/alpha-synuclein. Interacts with STX1A; in the striatum. Interacts with XIAP (via BIR3 domain) following the induction of apoptosis. Interacts with AREL1 (via HECT domain); in the cytoplasm following induction of apoptosis. Interacts with DPYSL5. In terms of processing, phosphorylated by DYRK1A. Post-translationally, ubiquitinated by AREL1. May be phosphorylated. In terms of tissue distribution, expressed in the cerebral cortex, striatum, midbrain, cerebellum and spinal cord (at protein level). Expressed in the substantia nigra pars compacta, ventral tegmental area, projection fiber bundles and in axon terminals surrounding striatal neurons (at protein level). Expressed in hair follicle stem cells (at protein level). Expressed in small intestinal crypts; abundantly expressed at the crypt base (at protein level). Widely expressed in the brain and to a lesser extent in the testis, lung and liver. Highly expressed in the brain and testis and, to a lesser extent in the heart, lung and kidney. In the brain, abundant in areas of high cell density, particularly in the stria terminalis. Expressed in the entorhinal, temporal and visual cortices and the hippocampus of the brain where is colocalizes with DYRK1A in postnatal day 1 and adult mice. Expressed and extensively colocalizes with DYRK1A in apical dendrites of pyramidal cells. As to expression, predominantly expressed in embryonic brain and dorsal root ganglion neurons. In terms of tissue distribution, expressed in LGR5-positive intestinal stem cells and lysozyme-positive Paneth cells (at protein level). Expressed in the brain and testis.

It is found in the cytoplasm. The protein localises to the cell projection. Its subcellular location is the cilium. The protein resides in the flagellum. It localises to the cytoplasmic vesicle. It is found in the secretory vesicle. The protein localises to the axon. Its subcellular location is the dendrite. The protein resides in the perikaryon. It localises to the synapse. It is found in the mitochondrion. The protein localises to the cytosol. Its function is as follows. Filament-forming cytoskeletal GTPase. Pro-apoptotic protein involved in LGR5-positive intestinal stem cell and Paneth cell expansion in the intestines, via its interaction with XIAP. May also play a role in the regulation of cell fate in the intestine. Positive regulator of apoptosis involved in hematopoietic stem cell homeostasis; via its interaction with XIAP. Negative regulator of repair and hair follicle regeneration in response to injury, due to inhibition of hair follicle stem cell proliferation, potentially via its interaction with XIAP. Plays an important role in male fertility and sperm motility. During spermiogenesis, essential for the establishment of the annulus (a fibrous ring structure connecting the midpiece and the principal piece of the sperm flagellum) which is a requisite for the structural and mechanical integrity of the sperm. Involved in the migration of cortical neurons and the formation of neuron leading processes during embryonic development. Required for dopaminergic metabolism in presynaptic autoreceptors; potentially via activity as a presynaptic scaffold protein. This Mus musculus (Mouse) protein is Septin-4.